The primary structure comprises 668 residues: Biotin biosynthesis bifunctional protein BioWF (668 aa).

Arg293 is a substrate binding site. A pyridoxal 5'-phosphate-binding site is contributed by 380 to 381 (GY). Residue His405 coordinates substrate. Pyridoxal 5'-phosphate-binding positions include Ser451, 476-479 (DDAH), and 507-510 (TASK). An N6-(pyridoxal phosphate)lysine modification is found at Lys510.

In the N-terminal section; belongs to the BioW family. The protein in the C-terminal section; belongs to the class-II pyridoxal-phosphate-dependent aminotransferase family. BioF subfamily. In terms of assembly, homodimer. Mg(2+) is required as a cofactor. The cofactor is pyridoxal 5'-phosphate.

It catalyses the reaction heptanedioate + ATP + CoA = 6-carboxyhexanoyl-CoA + AMP + diphosphate. The catalysed reaction is 6-carboxyhexanoyl-[ACP] + L-alanine + H(+) = (8S)-8-amino-7-oxononanoate + holo-[ACP] + CO2. It functions in the pathway metabolic intermediate metabolism; pimeloyl-CoA biosynthesis; pimeloyl-CoA from pimelate: step 1/1. It participates in cofactor biosynthesis; biotin biosynthesis. Catalyzes both the decarboxylative condensation of pimeloyl-[acyl-carrier protein] and L-alanine to produce 8-amino-7-oxononanoate (AON), [acyl-carrier protein], and carbon dioxide, and the transformation of pimelate into pimeloyl-CoA with concomitant hydrolysis of ATP to AMP. The polypeptide is Biotin biosynthesis bifunctional protein BioWF (Cutibacterium acnes (strain SK137) (Propionibacterium acnes)).